We begin with the raw amino-acid sequence, 332 residues long: Fructose-1,6-bisphosphatase class 1 (332 aa).

Positions 91, 112, 114, and 115 each coordinate Mg(2+). Residues 115-118, Asn208, Tyr241, and Lys271 contribute to the substrate site; that span reads DGSS. Glu277 contributes to the Mg(2+) binding site.

It belongs to the FBPase class 1 family. As to quaternary structure, homotetramer. Mg(2+) serves as cofactor.

It is found in the cytoplasm. It catalyses the reaction beta-D-fructose 1,6-bisphosphate + H2O = beta-D-fructose 6-phosphate + phosphate. It functions in the pathway carbohydrate biosynthesis; Calvin cycle. In Chlorobium phaeobacteroides (strain DSM 266 / SMG 266 / 2430), this protein is Fructose-1,6-bisphosphatase class 1.